Consider the following 388-residue polypeptide: Spermosin (388 aa).

Positions 1-22 (MAAINVIFISGAIALFALTGSC) are cleaved as a signal peptide. A compositionally biased stretch (polar residues) spans 29–49 (FTNKPYATQNPYSPPQTNQPT). The disordered stretch occupies residues 29-98 (FTNKPYATQN…SENSESENSE (70 aa)). The segment covering 54–64 (QPGPAPTPAPY) has biased composition (pro residues). Disulfide bonds link Cys-116/Cys-251, Cys-163/Cys-179, Cys-265/Cys-330, Cys-295/Cys-310, and Cys-320/Cys-349. Residues 130-372 (IVGGAEAVPN…NLEWLCCYMP (243 aa)) enclose the Peptidase S1 domain. Catalysis depends on charge relay system residues His-178 and Asp-231. The active-site Charge relay system is the Ser-324.

Belongs to the peptidase S1 family. Heterodimer of a heavy chain and either an L1 light chain or an L2 light chain linked by a disulfide bond. As to expression, detected in sperm, but not in unfertilized eggs (at protein level). Expressed in gonad, but not in hepatopancreas, intestine or branchial basket.

It localises to the secreted. The catalysed reaction is Hydrolyzes arginyl bonds, preferably with Pro in the P2 position.. With respect to regulation, inhibited by peptidyl-argininals with Pro in the P2 position, diisopropyl fluorophosphate, phenylmethanesulfonyl fluoride, leupeptin, antipain, soybean trypsin inhibitor, aprotinin, ovomucoid, valyl-prolyl-arginyl-chloromethane, glycyl-valyl-arginyl-chloromethane, p-aminobenzamidine, benzamidine, zinc chloride and mercuric chloride. Trypsin-like protease with a narrow substrate specificity. Preferentially hydrolyzes substrates with Pro in the P2 position and Val in the P3 position. Plays a role in fertilization. The sequence is that of Spermosin from Halocynthia roretzi (Sea squirt).